The primary structure comprises 128 residues: Holo-[acyl-carrier-protein] synthase (128 aa).

Mg(2+) contacts are provided by Asp8 and Glu59.

This sequence belongs to the P-Pant transferase superfamily. AcpS family. The cofactor is Mg(2+).

The protein localises to the cytoplasm. It catalyses the reaction apo-[ACP] + CoA = holo-[ACP] + adenosine 3',5'-bisphosphate + H(+). Transfers the 4'-phosphopantetheine moiety from coenzyme A to a Ser of acyl-carrier-protein. This is Holo-[acyl-carrier-protein] synthase from Rickettsia typhi (strain ATCC VR-144 / Wilmington).